Consider the following 211-residue polypeptide: Uridine kinase (211 aa).

12–19 (GGSGGGKT) is an ATP binding site.

It belongs to the uridine kinase family.

It localises to the cytoplasm. It carries out the reaction uridine + ATP = UMP + ADP + H(+). The enzyme catalyses cytidine + ATP = CMP + ADP + H(+). Its pathway is pyrimidine metabolism; CTP biosynthesis via salvage pathway; CTP from cytidine: step 1/3. The protein operates within pyrimidine metabolism; UMP biosynthesis via salvage pathway; UMP from uridine: step 1/1. This chain is Uridine kinase, found in Streptococcus thermophilus (strain CNRZ 1066).